The sequence spans 218 residues: Large ribosomal subunit protein uL3 (218 aa).

Positions 126–170 (HGFSRGPMSHGSKNHREPGSTGAGTTPGRIYPGKRMAGRYGGKKR) are disordered.

Belongs to the universal ribosomal protein uL3 family. As to quaternary structure, part of the 50S ribosomal subunit. Forms a cluster with proteins L14 and L19.

In terms of biological role, one of the primary rRNA binding proteins, it binds directly near the 3'-end of the 23S rRNA, where it nucleates assembly of the 50S subunit. This is Large ribosomal subunit protein uL3 from Prochlorococcus marinus (strain MIT 9313).